The following is a 423-amino-acid chain: MAKEKEHINVAFIGHVDHGKSTLIGRLLYETGEIPEHIIEKMRKEAQEKGKATFEFAWVMDRLKEERERGVTIDVAHRKFQTDKYYITIVDCPGHRDFIKNMITGASQADAAVLVMDVVEKVQPQTREHIFLARTLGINQIIVAINKMDRVNYDQKEYEAAKEAVSKLLKMVGYKVDEIPFIPVSAYYGDNVAKKSDKTPWYNGPTLLEAFDLLKPPEKLVDKPLRIPIQDVYSISGVGTVPVGRVESGVLRVGDKVVFEPAGVSGEVKSIEMHHEPIQEAYPGDNIGFNVRGVSKKDIRRGDVAGHPDNPPTVVKDFTAQLVVLQHPTAITVGYTPVVHAHTAQIACRFVELQKKIDPRTGQVKEENPQFLKTGDAAIVKLEPTRPMVIERVKDIPPMGRFAIRDMGMTIGAGMVLDLTPRK.

One can recognise a tr-type G domain in the interval K5–V221. Positions G14–S21 are G1. G14–S21 provides a ligand contact to GTP. Mg(2+) is bound at residue S21. Residues G70–D74 are G2. Residues D91–G94 are G3. GTP-binding positions include D91–H95 and N146–D149. The tract at residues N146–D149 is G4. Residues S185–Y187 form a G5 region.

This sequence belongs to the TRAFAC class translation factor GTPase superfamily. Classic translation factor GTPase family. EF-Tu/EF-1A subfamily.

The protein resides in the cytoplasm. The enzyme catalyses GTP + H2O = GDP + phosphate + H(+). Functionally, GTP hydrolase that promotes the GTP-dependent binding of aminoacyl-tRNA to the A-site of ribosomes during protein biosynthesis. The sequence is that of Elongation factor 1-alpha from Archaeoglobus fulgidus (strain ATCC 49558 / DSM 4304 / JCM 9628 / NBRC 100126 / VC-16).